Here is a 440-residue protein sequence, read N- to C-terminus: uncharacterized protein (440 aa).

A signal peptide spans 1 to 17 (MDRFFCTVWVWSVLFGA). Residue Cys-18 is the site of N-palmitoyl cysteine attachment. Residue Cys-18 is the site of S-diacylglycerol cysteine attachment. The segment at 241-268 (SALQERPSSPEPVVSTIPSPEGEENSAA) is disordered.

It is found in the cell membrane. This is an uncharacterized protein from Treponema pallidum (strain Nichols).